A 447-amino-acid polypeptide reads, in one-letter code: N-succinylarginine dihydrolase (447 aa).

Substrate is bound by residues 19–28, asparagine 110, and 137–138; these read AGLSFGNEAS and HR. Residue glutamate 174 is part of the active site. Residue arginine 212 coordinates substrate. Histidine 248 is an active-site residue. Residues aspartate 250 and asparagine 359 each coordinate substrate. Cysteine 365 functions as the Nucleophile in the catalytic mechanism.

It belongs to the succinylarginine dihydrolase family. In terms of assembly, homodimer.

The catalysed reaction is N(2)-succinyl-L-arginine + 2 H2O + 2 H(+) = N(2)-succinyl-L-ornithine + 2 NH4(+) + CO2. It participates in amino-acid degradation; L-arginine degradation via AST pathway; L-glutamate and succinate from L-arginine: step 2/5. In terms of biological role, catalyzes the hydrolysis of N(2)-succinylarginine into N(2)-succinylornithine, ammonia and CO(2). The polypeptide is N-succinylarginine dihydrolase (Salmonella paratyphi B (strain ATCC BAA-1250 / SPB7)).